The primary structure comprises 453 residues: Na(+)/H(+) antiporter NhaA 2 (453 aa).

12 helical membrane passes run 23 to 43 (FLHI…AALI), 74 to 94 (LHFW…GMEI), 111 to 131 (LPMA…LSFG), 139 to 159 (GWAV…ALLG), 168 to 188 (VFLL…IAFF), 191 to 211 (GGLD…VIGL), 214 to 234 (IGVG…LGIL), 235 to 255 (LTGA…PVTA), 316 to 336 (VAFG…LSGV), 345 to 365 (WVMI…IVSV), 386 to 406 (IVLV…IANL), and 419 to 439 (LGVL…GVWS).

The protein belongs to the NhaA Na(+)/H(+) (TC 2.A.33) antiporter family.

The protein localises to the cell inner membrane. It catalyses the reaction Na(+)(in) + 2 H(+)(out) = Na(+)(out) + 2 H(+)(in). Na(+)/H(+) antiporter that extrudes sodium in exchange for external protons. The chain is Na(+)/H(+) antiporter NhaA 2 from Pseudomonas putida (strain ATCC 700007 / DSM 6899 / JCM 31910 / BCRC 17059 / LMG 24140 / F1).